A 400-amino-acid polypeptide reads, in one-letter code: MSKLILAINAGSSSLKFQLIRMPEEELVTKGLVERIGLKDSIFTIEVNGEKVKTVQDIKDHVEAVDIMLDAFKAHNIINDINDIDGTGHRVVHGGEKFPESVAITDEVEKEIEELSELAPLHNPANLMGIRAFRKLLPNIPHVAIFDTAFHQTMPEKAYLYSLPYHYYKDYGIRKYGFHGTSHKFVSQRAAEMLDKPIEDLRIISCHIGNGASIAAIDGGKSIDTSMGFTPLAGVTMGTRSGNIDPALIPFIMEKTGKTAEQVLEILNKESGLLGLSGTSSDLRDLSEEAESGKARSQMALDVFASKIHKYIGSYAARMHGVDVIVFTAGIGENSVEIRAKVLEGLEFMGVYWDPKKNENLLRGKEGFINYPHSPVKVVVIPTDEESMIARDVMTFGGLK.

Asn-9 contributes to the Mg(2+) binding site. Lys-16 serves as a coordination point for ATP. Arg-90 is a binding site for substrate. Asp-147 serves as the catalytic Proton donor/acceptor. Residues 207 to 211, 282 to 284, and 330 to 334 contribute to the ATP site; these read HIGNG, DLR, and GIGEN. Glu-385 is a binding site for Mg(2+).

This sequence belongs to the acetokinase family. In terms of assembly, homodimer. It depends on Mg(2+) as a cofactor. The cofactor is Mn(2+).

The protein localises to the cytoplasm. It catalyses the reaction acetate + ATP = acetyl phosphate + ADP. Its pathway is metabolic intermediate biosynthesis; acetyl-CoA biosynthesis; acetyl-CoA from acetate: step 1/2. Its function is as follows. Catalyzes the formation of acetyl phosphate from acetate and ATP. Can also catalyze the reverse reaction. This Staphylococcus aureus (strain USA300) protein is Acetate kinase.